A 1031-amino-acid chain; its full sequence is MFDSFMKRNQLALIMFRACSKLQYHGVNTSLSRHLFLAKRNLSISSACLEAKNSQKFPALDTFEPRHIGPSKTDQQYQLESLGYKDFDSFLKDVIPDSVRTPESQLMAFGSVNPNEKNPPVNYSESEFTTLANNVANQNKLIKSFIGMGYYNVKLPAAIQRNVLENPEWYTQYTPYQAEISQGRLESMMNYQTMIADLTGLSISNASLLDEGTAAGEAMVMLMANDKKKRKTFLVDKNIYPNTLSVLRTRASGFGIKIELDNITPELITKSAKHVFGIFVQYPAADGSIFDYGHLAATARSFNMHVVAATDLLALTILKSPGEWGADVAVGSTQRFGLPMGYGGPHAGFFACSEEFKRKIPGRLIGLSKDRLENPAYRLALQTREQHIRREKATSNICTAQALLANMSAFYAIYHGPNGLQEIANRIYASTSFLKSALESSGYKIVNKSHFFDTLTIEVESADKVLAKALDHGYNLRKVDDSHVGLSLDETVCDKDIQALFSIFNINKSVDQYYMEIATSEPNGNSASTVDNLSICSLPENFRRTTLYLQHPVFNRYHSETELMRYIHHLQSKDLSLAHAMTPLGSCTMKLNAVTEMMPITNPLFANIHPYVPEEQAKGYRHVIEDLQLMLTTITGFDAACFQPNSGAAGEYTGLSVIRAYQRSIGQGHRNICLIPVSAHGTNPASAAMAGFTVIPVKCLNNGYLDMQDLKEKASKHADKLAAFMVTYPSTFGIFEPDVKEALEVIHEHGGQVYFDGANMNAMVGLCKAGDIGADVCHLNLHKTFCIPHGGGGPGVGPICVKKHLADFLPSHPVVSCGGKNGITSVSSSPFGSAGILPISWAYMRMMGLAGLRDASKAALLNANYMAKRLSSHYKLVYTNKNNLCAHEFILDAREFKATAGVDATDIAKRLQDYSFHAPTLSWPIANTLMIEPTESESMYEMDRFCDALISIRQEIREIEEGLQPKDNNLLVNAPHPQKDIASEKWDRPYTRERAVYPVPLLKERKFWPSVARLDDAYGDKNLFCTCSPVV.

The N-terminal 49 residues, 1–49 (MFDSFMKRNQLALIMFRACSKLQYHGVNTSLSRHLFLAKRNLSISSACL), are a transit peptide targeting the mitochondrion. An N6-(pyridoxal phosphate)lysine modification is found at Lys-783.

Belongs to the GcvP family. Pyridoxal 5'-phosphate serves as cofactor.

It localises to the mitochondrion. The catalysed reaction is N(6)-[(R)-lipoyl]-L-lysyl-[glycine-cleavage complex H protein] + glycine + H(+) = N(6)-[(R)-S(8)-aminomethyldihydrolipoyl]-L-lysyl-[glycine-cleavage complex H protein] + CO2. The glycine cleavage system catalyzes the degradation of glycine. The P protein binds the alpha-amino group of glycine through its pyridoxal phosphate cofactor; CO(2) is released and the remaining methylamine moiety is then transferred to the lipoamide cofactor of the H protein. In Schizosaccharomyces pombe (strain 972 / ATCC 24843) (Fission yeast), this protein is Putative glycine dehydrogenase (decarboxylating), mitochondrial (gcv2).